The following is a 442-amino-acid chain: Putative aminohydrolase SsnA (442 aa).

Residues histidine 62, histidine 64, histidine 227, and aspartate 312 each contribute to the Zn(2+) site.

This sequence belongs to the metallo-dependent hydrolases superfamily. ATZ/TRZ family.

The protein is Putative aminohydrolase SsnA (ssnA) of Escherichia coli (strain K12).